A 444-amino-acid chain; its full sequence is Chromosome partition protein MukF (444 aa).

The segment at 212 to 240 (LDETSGNLRELQDTLNAAGDKLQAQLLRI) is leucine-zipper.

The protein belongs to the MukF family. As to quaternary structure, interacts, and probably forms a ternary complex, with MukE and MukB via its C-terminal region. The complex formation is stimulated by calcium or magnesium. It is required for an interaction between MukE and MukB.

The protein localises to the cytoplasm. It localises to the nucleoid. In terms of biological role, involved in chromosome condensation, segregation and cell cycle progression. May participate in facilitating chromosome segregation by condensation DNA from both sides of a centrally located replisome during cell division. Not required for mini-F plasmid partitioning. Probably acts via its interaction with MukB and MukE. Overexpression results in anucleate cells. It has a calcium binding activity. This is Chromosome partition protein MukF from Haemophilus influenzae (strain ATCC 51907 / DSM 11121 / KW20 / Rd).